Here is a 583-residue protein sequence, read N- to C-terminus: 1-deoxy-D-xylulose-5-phosphate synthase (583 aa).

Residues His-74 and 115–117 contribute to the thiamine diphosphate site; that span reads GHS. A Mg(2+)-binding site is contributed by Asp-146. Thiamine diphosphate is bound by residues 147-148, Asn-175, Phe-244, and Glu-327; that span reads GG. Asn-175 lines the Mg(2+) pocket.

Belongs to the transketolase family. DXPS subfamily. In terms of assembly, homodimer. It depends on Mg(2+) as a cofactor. The cofactor is thiamine diphosphate.

It catalyses the reaction D-glyceraldehyde 3-phosphate + pyruvate + H(+) = 1-deoxy-D-xylulose 5-phosphate + CO2. Its pathway is metabolic intermediate biosynthesis; 1-deoxy-D-xylulose 5-phosphate biosynthesis; 1-deoxy-D-xylulose 5-phosphate from D-glyceraldehyde 3-phosphate and pyruvate: step 1/1. Functionally, catalyzes the acyloin condensation reaction between C atoms 2 and 3 of pyruvate and glyceraldehyde 3-phosphate to yield 1-deoxy-D-xylulose-5-phosphate (DXP). This chain is 1-deoxy-D-xylulose-5-phosphate synthase, found in Myxococcus xanthus (strain DK1622).